The primary structure comprises 448 residues: MSKQLVSIIDVPKHIGEEITIGAWVANKSGKGKIAFLQLRDGTAFFQGVAFKPNFIEKFGEEEGLEKFDTIKHLSQETSIYVTGMVKEDERSKFGYELDITDIEVIGESQGYPITPKEHGTDFLMDNRHLWLRSRKQMAIQQIRNAIIYATYDFFDKNGFIKFDSPILSSNAAEDSTELFETDYFGTPAFLSQSGQLYLEAGAMALGRVFDFGPVFRAEKSKTRRHLTEFWMMDAEYSFLSHDESLDLQEAYVKALIQGAIDRAPQALEILERDVDLLKKYIAEPFKRVSYDEAIDLLQAHEKDEDTDYEHLEHGDDFGSPHETWISNYFGVPTFVVNYPASFKAFYMKPVPGNPERVLCADLLAPEGYGEIIGGSMREDDYDALVAKMEELGMDRSEYEFYLDLRKYGSVPHGGFGIGIERMVTFVAGTKHIREAIPFPRMLHRIKP.

This sequence belongs to the class-II aminoacyl-tRNA synthetase family. In terms of assembly, homodimer.

It is found in the cytoplasm. It catalyses the reaction tRNA(Asn) + L-asparagine + ATP = L-asparaginyl-tRNA(Asn) + AMP + diphosphate + H(+). The chain is Asparagine--tRNA ligase from Streptococcus thermophilus (strain ATCC BAA-491 / LMD-9).